We begin with the raw amino-acid sequence, 439 residues long: Rhodopsin (439 aa).

N1 carries N-linked (GlcNAc...) asparagine glycosylation. Residues 1–26 (NETWWYNPYMDIHSHWKQFDQVPAAV) are Extracellular-facing. Residues 27–51 (YYSLGIFIAICGIIGCAGNGIVIYL) traverse the membrane as a helical segment. Topologically, residues 52–63 (FTKTKSLQTPAN) are cytoplasmic. Residues 64-90 (MFIINLAFSDFTFSLVNGFPMMTISCF) traverse the membrane as a helical segment. Over 91–102 (LKHWVFGQAACK) the chain is Extracellular. A disulfide bond links C101 and C179. Residues 103–124 (VYGLIGGIFGLTSIMTMTMISI) form a helical membrane-spanning segment. The 'Ionic lock' involved in activated form stabilization motif lies at 125-127 (DRY). Topologically, residues 125-144 (DRYNVIRRPMSASKKMSHRK) are cytoplasmic. Residues 145 to 165 (AFIMIVFVWIWSTIWAIGPIF) form a helical membrane-spanning segment. Over 166–192 (GWGAYQLEGVLCNCSFDYITRDASTRS) the chain is Extracellular. A helical transmembrane segment spans residues 193 to 217 (NIVCMYIFAFMFPIVVIFFCYFNIV). Residues 218–254 (MSVSNHEKEMAAMAKRLNAKELRKAQAGASAEMKLAK) are Cytoplasmic-facing. The helical transmembrane segment at 255–276 (ISIVIVTQSLLSWSPYAIVALL) threads the bilayer. Residues 277–286 (AQFGPIEWVT) lie on the Extracellular side of the membrane. The chain crosses the membrane as a helical span at residues 287–308 (PYAAQLPVMFAKASAIHNPMIY). N6-(retinylidene)lysine is present on K298. Over 309-439 (SVSHPKFREA…PQAAPPQGVD (131 aa)) the chain is Cytoplasmic. S-palmitoyl cysteine attachment occurs at residues C329 and C330. A compositionally biased stretch (low complexity) spans 369–381 (MMQKMQAQQQQQP). The disordered stretch occupies residues 369-439 (MMQKMQAQQQ…PQAAPPQGVD (71 aa)). Residues 382–433 (AYPPQGYPPQGYPPPPPQGYPPQGYPPQGYPPQGYPPPPQGPPPQGPPPQAA) are compositionally biased toward pro residues.

Belongs to the G-protein coupled receptor 1 family. Opsin subfamily. In terms of processing, contains one covalently linked retinal chromophore. Upon light absorption, the covalently bound 11-cis-retinal is converted to all-trans-retinal. After hydrolysis of the Schiff base and release of the covalently bound all-trans-retinal, active rhodopsin is regenerated by binding of a fresh molecule of 11-cis-retinal.

It is found in the cell projection. The protein localises to the rhabdomere membrane. Photoreceptor required for image-forming vision at low light intensity. Light-induced isomerization of 11-cis to all-trans retinal triggers a conformational change that activates signaling via G-proteins. Signaling mediates the activation of phospholipase C. Subsequent receptor phosphorylation mediates displacement of the bound G-protein alpha subunit by arrestin and terminates signaling. In Alloteuthis subulata (Squid), this protein is Rhodopsin (RHO).